A 141-amino-acid polypeptide reads, in one-letter code: Ribonuclease P protein component (141 aa).

Over residues 114 to 134 (RRIKAKGERRGDGKRRTERPE) the composition is skewed to basic and acidic residues. Residues 114 to 141 (RRIKAKGERRGDGKRRTERPESGPVNGK) form a disordered region.

It belongs to the RnpA family. As to quaternary structure, consists of a catalytic RNA component (M1 or rnpB) and a protein subunit.

It catalyses the reaction Endonucleolytic cleavage of RNA, removing 5'-extranucleotides from tRNA precursor.. Functionally, RNaseP catalyzes the removal of the 5'-leader sequence from pre-tRNA to produce the mature 5'-terminus. It can also cleave other RNA substrates such as 4.5S RNA. The protein component plays an auxiliary but essential role in vivo by binding to the 5'-leader sequence and broadening the substrate specificity of the ribozyme. The polypeptide is Ribonuclease P protein component (Brucella anthropi (strain ATCC 49188 / DSM 6882 / CCUG 24695 / JCM 21032 / LMG 3331 / NBRC 15819 / NCTC 12168 / Alc 37) (Ochrobactrum anthropi)).